The following is a 253-amino-acid chain: uncharacterized protein (253 aa).

Ser-145 is a binding site for substrate. Tyr-159 (proton acceptor) is an active-site residue.

This sequence belongs to the short-chain dehydrogenases/reductases (SDR) family.

This is an uncharacterized protein from Mycobacterium tuberculosis (strain CDC 1551 / Oshkosh).